A 1663-amino-acid polypeptide reads, in one-letter code: Cortactin-binding protein 2 (1663 aa).

5 disordered regions span residues 1-23 (MATD…AGAA), 203-222 (KKKT…RSTE), 359-440 (QASH…LHPG), 454-478 (GNAN…SPTS), and 498-617 (RFTS…KPSI). The stretch at 119 to 276 (KKMQERMSAQ…EQLKRGSDSK (158 aa)) forms a coiled coil. The span at 386-396 (PSTGSTPDPTS) shows a compositional bias: low complexity. The residue at position 498 (arginine 498) is an Asymmetric dimethylarginine. Residues 583 to 593 (TVASPPSSLPQ) are compositionally biased toward polar residues. ANK repeat units follow at residues 709 to 739 (GRPT…DINY), 743 to 772 (DGHS…QVNA), 776 to 805 (NGFT…NINH), 809 to 838 (GGQT…NRSV), 842 to 871 (DGWT…PARG), and 912 to 942 (EGWT…EPER). The tract at residues 1446–1485 (NKKKGESGAWRKVNTSPRRKSGRFSLPTWNKPDLSTEGMK) is disordered. A Phosphoserine modification is found at serine 1524. Residues 1580–1663 (SQKEVSPLSS…KNEHLEKPNK (84 aa)) form a disordered region. Residues 1582–1599 (KEVSPLSSHQTTECSNSK) show a composition bias toward polar residues. Residues 1624 to 1638 (SQNTKRSSSSSNTRQ) are compositionally biased toward low complexity. Positions 1645–1663 (SKEENWNLHKNEHLEKPNK) are enriched in basic and acidic residues.

In terms of assembly, interacts with CTTN/cortactin SH3 domain. Interacts with STRN, STRN4/zinedin and MOB4/phocein; this interactions mediate the association with the STRIPAK core complex and may regulate dendritic spine distribution of the STRIPAK complex in hippocampal neurons. Activation of glutamate receptors weakens the interaction with STRN and STRN4.

It is found in the cytoplasm. It localises to the cell cortex. Its subcellular location is the cell projection. The protein localises to the dendritic spine. Functionally, regulates the dendritic spine distribution of CTTN/cortactin in hippocampal neurons, and thus controls dendritic spinogenesis and dendritic spine maintenance. Associates with the striatin-interacting phosphatase and kinase (STRIPAK) core complex to regulate dendritic spine distribution of the STRIPAK complex in hippocampal neurons. The polypeptide is Cortactin-binding protein 2 (CTTNBP2) (Pongo abelii (Sumatran orangutan)).